The chain runs to 100 residues: Urease subunit gamma (100 aa).

The protein belongs to the urease gamma subunit family. As to quaternary structure, heterotrimer of UreA (gamma), UreB (beta) and UreC (alpha) subunits. Three heterotrimers associate to form the active enzyme.

Its subcellular location is the cytoplasm. The catalysed reaction is urea + 2 H2O + H(+) = hydrogencarbonate + 2 NH4(+). It functions in the pathway nitrogen metabolism; urea degradation; CO(2) and NH(3) from urea (urease route): step 1/1. The sequence is that of Urease subunit gamma from Ralstonia nicotianae (strain ATCC BAA-1114 / GMI1000) (Ralstonia solanacearum).